Consider the following 45-residue polypeptide: uncharacterized protein (45 aa).

A helical transmembrane segment spans residues 10-27 (LLYFVLFVDIYGIFTNNI).

The protein resides in the membrane. This is an uncharacterized protein from Dictyostelium discoideum (Social amoeba).